The following is a 354-amino-acid chain: MNGTEGPAFYVPMSNATGVVRSPYEYPQYYLVAPWAYGLLAAYMFFLIITGFPVNFLTLYVTIEHKKLRTPLNYILLNLAIADLFMVFGGFTTTMYTSLHGYFVFGRLGCNLEGFFATLGGEMGLWSLVVLAIERWMVVCKPVSNFRFGENHAIMGVAFTWVMACSCAVPPLVGWSRYIPEGMQCSCGVDYYTRTPGVNNESFVIYMFIVHFFIPLIVIFFCYGRLVCTVKEAAAQQQESETTQRAEREVTRMVIIMVIAFLICWLPYAGVAWYIFTHQGSEFGPVFMTLPAFFAKTSAVYNPCIYICMNKQFRHCMITTLCCGKNPFEEEEGASTTASKTEASSVSSSSVSPA.

The Extracellular portion of the chain corresponds to 1-36 (MNGTEGPAFYVPMSNATGVVRSPYEYPQYYLVAPWA). N-linked (GlcNAc...) asparagine glycosylation is found at N2 and N15. Residues 37–61 (YGLLAAYMFFLIITGFPVNFLTLYV) traverse the membrane as a helical segment. The Cytoplasmic portion of the chain corresponds to 62 to 73 (TIEHKKLRTPLN). A helical membrane pass occupies residues 74-96 (YILLNLAIADLFMVFGGFTTTMY). Topologically, residues 97–110 (TSLHGYFVFGRLGC) are extracellular. C110 and C187 form a disulfide bridge. The helical transmembrane segment at 111–133 (NLEGFFATLGGEMGLWSLVVLAI) threads the bilayer. Positions 134-136 (ERW) match the 'Ionic lock' involved in activated form stabilization motif. Residues 134 to 152 (ERWMVVCKPVSNFRFGENH) are Cytoplasmic-facing. Residues 153 to 173 (AIMGVAFTWVMACSCAVPPLV) form a helical membrane-spanning segment. Topologically, residues 174-202 (GWSRYIPEGMQCSCGVDYYTRTPGVNNES) are extracellular. N-linked (GlcNAc...) asparagine glycosylation is present at N200. The chain crosses the membrane as a helical span at residues 203–224 (FVIYMFIVHFFIPLIVIFFCYG). Residues 225 to 252 (RLVCTVKEAAAQQQESETTQRAEREVTR) are Cytoplasmic-facing. Residues 253–274 (MVIIMVIAFLICWLPYAGVAWY) traverse the membrane as a helical segment. The Extracellular segment spans residues 275–286 (IFTHQGSEFGPV). A helical transmembrane segment spans residues 287 to 308 (FMTLPAFFAKTSAVYNPCIYIC). The residue at position 296 (K296) is an N6-(retinylidene)lysine. Topologically, residues 309-354 (MNKQFRHCMITTLCCGKNPFEEEEGASTTASKTEASSVSSSSVSPA) are cytoplasmic. The segment at 333 to 354 (GASTTASKTEASSVSSSSVSPA) is disordered. Low complexity predominate over residues 334–354 (ASTTASKTEASSVSSSSVSPA).

Belongs to the G-protein coupled receptor 1 family. Opsin subfamily. Post-translationally, phosphorylated on some or all of the serine and threonine residues present in the C-terminal region. In terms of processing, contains one covalently linked retinal chromophore. As to expression, retinal rod photoreceptor cells, predominantly in the outer segments (at protein level). Retinal rod photoreceptor cells.

Its subcellular location is the membrane. It is found in the cell projection. The protein resides in the cilium. It localises to the photoreceptor outer segment. Functionally, photoreceptor required for image-forming vision at low light intensity. While most salt water fish species use retinal as chromophore, most freshwater fish use 3-dehydroretinal, or a mixture of retinal and 3-dehydroretinal. Light-induced isomerization of 11-cis to all-trans retinal triggers a conformational change that activates signaling via G-proteins. Subsequent receptor phosphorylation mediates displacement of the bound G-protein alpha subunit by arrestin and terminates signaling. The polypeptide is Rhodopsin (rho) (Danio rerio (Zebrafish)).